A 378-amino-acid polypeptide reads, in one-letter code: tRNA-specific 2-thiouridylase MnmA (378 aa).

ATP contacts are provided by residues 27 to 34 and Leu53; that span reads AMSGGVDS. Residue Cys121 is the Nucleophile of the active site. Residues Cys121 and Cys218 are joined by a disulfide bond. Position 145 (Gly145) interacts with ATP. Residues 168–170 form an interaction with tRNA region; the sequence is RDQ. Cys218 serves as the catalytic Cysteine persulfide intermediate.

Belongs to the MnmA/TRMU family.

Its subcellular location is the cytoplasm. It catalyses the reaction S-sulfanyl-L-cysteinyl-[protein] + uridine(34) in tRNA + AH2 + ATP = 2-thiouridine(34) in tRNA + L-cysteinyl-[protein] + A + AMP + diphosphate + H(+). In terms of biological role, catalyzes the 2-thiolation of uridine at the wobble position (U34) of tRNA, leading to the formation of s(2)U34. This is tRNA-specific 2-thiouridylase MnmA from Rhizorhabdus wittichii (strain DSM 6014 / CCUG 31198 / JCM 15750 / NBRC 105917 / EY 4224 / RW1) (Sphingomonas wittichii).